A 668-amino-acid chain; its full sequence is Threonine--tRNA ligase (668 aa).

A TGS domain is found at 1–64 (MSEAIFLTFP…ADGKIEIITR (64 aa)). A catalytic region spans residues 245–553 (DHRKLGREMD…LIENFAGHLP (309 aa)). 3 residues coordinate Zn(2+): cysteine 347, histidine 398, and histidine 530.

It belongs to the class-II aminoacyl-tRNA synthetase family. As to quaternary structure, homodimer. Zn(2+) is required as a cofactor.

It localises to the cytoplasm. It carries out the reaction tRNA(Thr) + L-threonine + ATP = L-threonyl-tRNA(Thr) + AMP + diphosphate + H(+). In terms of biological role, catalyzes the attachment of threonine to tRNA(Thr) in a two-step reaction: L-threonine is first activated by ATP to form Thr-AMP and then transferred to the acceptor end of tRNA(Thr). Also edits incorrectly charged L-seryl-tRNA(Thr). This is Threonine--tRNA ligase from Rhizobium leguminosarum bv. trifolii (strain WSM2304).